The sequence spans 173 residues: Alpha-crystallin A chain (173 aa).

Methionine 1 carries the N-acetylmethionine modification. The required for complex formation with BFSP1 and BFSP2 stretch occupies residues 1–63 (MDIAIQHPWF…RTVLDSGISE (63 aa)). A Deamidated glutamine; partial modification is found at glutamine 6. A Phosphoserine modification is found at serine 45. Deamidated glutamine; partial is present on glutamine 50. Residues 52-162 (LFRTVLDSGI…GHSERAIPVS (111 aa)) enclose the sHSP domain. N6-acetyllysine is present on residues lysine 70 and lysine 99. A Zn(2+)-binding site is contributed by histidine 100. Asparagine 101 carries the post-translational modification Deamidated asparagine; partial. The Zn(2+) site is built by glutamate 102 and histidine 107. The residue at position 122 (serine 122) is a Phosphoserine. Position 123 is a deamidated asparagine; partial (asparagine 123). The disordered stretch occupies residues 144–173 (PKVPSGVDAGHSERAIPVSREEKPSSAPSS). Residues 153–167 (GHSERAIPVSREEKP) show a composition bias toward basic and acidic residues. Residue histidine 154 coordinates Zn(2+). O-linked (GlcNAc) serine glycosylation is present at serine 162.

Belongs to the small heat shock protein (HSP20) family. As to quaternary structure, heteromer composed of three CRYAA and one CRYAB subunits. Inter-subunit bridging via zinc ions enhances stability, which is crucial as there is no protein turn over in the lens. Can also form homodimers and homotetramers (dimers of dimers) which serve as the building blocks of homooligomers. Within homooligomers, the zinc-binding motif is created from residues of 3 different molecules. His-100 and Glu-102 from one molecule are ligands of the zinc ion, and His-107 and His-154 residues from additional molecules complete the site with tetrahedral coordination geometry. Part of a complex required for lens intermediate filament formation composed of BFSP1, BFSP2 and CRYAA. Acetylation at Lys-70 may increase chaperone activity. In terms of processing, undergoes age-dependent proteolytical cleavage at the C-terminus.

The protein localises to the cytoplasm. Its subcellular location is the nucleus. Its function is as follows. Contributes to the transparency and refractive index of the lens. Acts as a chaperone, preventing aggregation of various proteins under a wide range of stress conditions. Required for the correct formation of lens intermediate filaments as part of a complex composed of BFSP1, BFSP2 and CRYAA. The sequence is that of Alpha-crystallin A chain (CRYAA) from Canis lupus familiaris (Dog).